Consider the following 123-residue polypeptide: Glycine cleavage system H protein (123 aa).

The Lipoyl-binding domain occupies 22–104 (VATVGITSYA…FGAGWLVKVR (83 aa)). An N6-lipoyllysine modification is found at lysine 63.

Belongs to the GcvH family. As to quaternary structure, the glycine cleavage system is composed of four proteins: P, T, L and H. The cofactor is (R)-lipoate.

Functionally, the glycine cleavage system catalyzes the degradation of glycine. The H protein shuttles the methylamine group of glycine from the P protein to the T protein. The sequence is that of Glycine cleavage system H protein from Clavibacter sepedonicus (Clavibacter michiganensis subsp. sepedonicus).